Consider the following 500-residue polypeptide: MSTKTVLVWYRNDLRVHDHEPLTSALHKNARVVALYCFDPRQFGKAPFGFEKTGPFRARFLLESVADLRRSLRQLGSDLLVRRGHPEEVIPALVSELEIAAVHYHGEVTSEELVVERDLQAALAPLNVPVRSFWGTTLVHPDDLPFAIEAIPELFTDFRKQVERSAAINPPLPAPAKLPPLPAVDPGEIPQLADLGLESPVTDERAVLQFKGGETSGLARLEEYFWQKSLLKSYKQTRNGMLGADYSSKFSAWLALGCLSARYIHEQVQTYETKRIKNDSTYWLIFELLWRDYFRFIAAKHGDRLFYTAGLRGLDIPWKEDWERFELWRTGQTGFPLVDANMRELAATGFMSNRGRQNVASFLTKNLGIHWHMGAEWFESRLIDYDVASNWGNWNYTAGVGNDARGFRFFNILKQARDYDPDGAYVKHWLPELAGLPPARVHEPWKLLPVEQKRFGVRLGVDYPQPVVDLFQSAAANEAIYNAAWEHHHRKRRGQPRSRT.

One can recognise a Photolyase/cryptochrome alpha/beta domain in the interval 4 to 138 (KTVLVWYRND…PVRSFWGTTL (135 aa)).

Belongs to the DNA photolyase class-1 family. It depends on FAD as a cofactor. (6R)-5,10-methylene-5,6,7,8-tetrahydrofolate is required as a cofactor.

Its function is as follows. May have a photoreceptor function. Binds DNA; probably functions as a transcriptional repressor. The protein is Cryptochrome DASH (cry) of Gloeobacter violaceus (strain ATCC 29082 / PCC 7421).